The sequence spans 830 residues: Adhesion G protein-coupled receptor E2 (830 aa).

The N-terminal stretch at 1 to 22 (MRHGHPRLLPGLLMLLLLPLGA) is a signal peptide. Topologically, residues 23–540 (AAQKTSGCAR…MAHYDVQEED (518 aa)) are extracellular. The EGF-like 1 domain occupies 26–68 (KTSGCARWCPPKSTCVNATTCRCSPGFSSLSGEIFSSPLESCD). 5 cysteine pairs are disulfide-bonded: C30-C40, C34-C46, C48-C67, C73-C87, and C81-C96. An N-linked (GlcNAc...) asparagine glycan is attached at N42. An EGF-like 1; calcium-binding domain is found at 69–108 (DIDECGPPPLVSCGRLADCQNTEGSYHCMCSPGYALASGA). N-linked (GlcNAc...) asparagine glycosylation occurs at N113. Residues 121–159 (DVDECQLKPRVCKSRGICTNTKGSYTCKCPPGFELNLGD) form the EGF-like 2; calcium-binding domain. Disulfide bonds link C125-C138, C132-C147, C169-C182, C176-C191, C218-C231, and C225-C240. The region spanning 165-203 (DVNECTSGQNPCHNSTHCLNNIGGYECRCRPGWKPVPGS) is the EGF-like 3; calcium-binding domain. N178 carries N-linked (GlcNAc...) asparagine glycosylation. The EGF-like 4; calcium-binding domain maps to 214-253 (DVDECSSGKHTCHYSTVCINTVGSYKCRCRRGWKPKPRFQ). N-linked (GlcNAc...) asparagine glycosylation is found at N258, N348, N361, and N379. One can recognise a GAIN-B domain in the interval 358 to 537 (WTFNASAGTD…AVLMAHYDVQ (180 aa)). Intrachain disulfides connect C489–C519 and C507–C521. Residues 489–537 (CVFWEHSQDECGHWSTRGCTVVDSGDTSTTCQCTHLSSFAVLMAHYDVQ) form a GPS region. Residues 541-561 (LVLPVITYVGLGLSLLCLLLA) form a helical membrane-spanning segment. Over 562–576 (ALTFLLCKAIQNTST) the chain is Cytoplasmic. A helical transmembrane segment spans residues 577 to 597 (SLHLQLLICLFLAHLLFLMAI). Topologically, residues 598-603 (DRTEIK) are extracellular. The chain crosses the membrane as a helical span at residues 604-624 (VLCSIIAGALHYLYLASFTWM). The Cytoplasmic segment spans residues 625-651 (LLEGLHLFLTARNLMVVNYSSVSMLMK). Residues 652-672 (KLMYPVGYGVPTLIVAISAAS) form a helical membrane-spanning segment. At 673 to 690 (RSHLYGTRTRCWLNPEER) the chain is on the extracellular side. Residues 691-711 (FIWSFLGPVCTIFSVNLGFFL) traverse the membrane as a helical segment. Residues 712–744 (MTLWILKSKLSSLNSDVSTLQNTRMLTFKAIAQ) are Cytoplasmic-facing. The helical transmembrane segment at 745-765 (LFILGCTWCLGILQVGPAAHV) threads the bilayer. The Extracellular segment spans residues 766–767 (MA). Residues 768-788 (YLFTIINSLQGVFIFLVYCLL) form a helical membrane-spanning segment. At 789 to 830 (SQQVREEYGKWFKGIRKTRAESEKYTLSSRAMSDVNKPMMVN) the chain is on the cytoplasmic side.

It belongs to the G-protein coupled receptor 2 family. Adhesion G-protein coupled receptor (ADGR) subfamily. In terms of assembly, forms a heterodimer, consisting of a large extracellular region non-covalently linked to a seven-transmembrane moiety. Interacts with chondroitin sulfate; the interaction with chondroitin sulfate is calcium-dependent. Interacts with CD55. Post-translationally, autoproteolytically cleaved into 2 subunits, an extracellular alpha subunit and a seven-transmembrane beta subunit.

The protein localises to the cell membrane. The protein resides in the cell projection. It localises to the ruffle membrane. Functionally, cell surface receptor that binds to the chondroitin sulfate moiety of glycosaminoglycan chains and promotes cell attachment. Promotes granulocyte chemotaxis, degranulation and adhesion. In macrophages, promotes the release of inflammatory cytokines, including IL8 and TNF. Signals probably through G-proteins. This Canis lupus familiaris (Dog) protein is Adhesion G protein-coupled receptor E2 (ADGRE2).